The following is an 88-amino-acid chain: YcgL domain-containing protein HI_1446 (88 aa).

Positions 1 to 85 (MLCAIYKSKK…QDDGLFNSLS (85 aa)) constitute a YcgL domain.

This chain is YcgL domain-containing protein HI_1446, found in Haemophilus influenzae (strain ATCC 51907 / DSM 11121 / KW20 / Rd).